The sequence spans 180 residues: Translation initiation factor IF-3 (180 aa).

It belongs to the IF-3 family. In terms of assembly, monomer.

The protein resides in the cytoplasm. IF-3 binds to the 30S ribosomal subunit and shifts the equilibrium between 70S ribosomes and their 50S and 30S subunits in favor of the free subunits, thus enhancing the availability of 30S subunits on which protein synthesis initiation begins. The chain is Translation initiation factor IF-3 from Pectobacterium atrosepticum (strain SCRI 1043 / ATCC BAA-672) (Erwinia carotovora subsp. atroseptica).